Consider the following 1601-residue polypeptide: Rap guanine nucleotide exchange factor 6 (1601 aa).

The residue at position 1 (methionine 1) is an N-acetylmethionine. 2 disordered regions span residues 1 to 22 (MNSPVDPGARQALRKKPPERTP) and 179 to 250 (PHPQ…QGRD). Serine 3 bears the Phosphoserine mark. Over residues 187 to 205 (SSSQSGCSIASDSGSSSLS) the composition is skewed to low complexity. The span at 228 to 241 (VDSEDDEEEDEEID) shows a compositional bias: acidic residues. 280 to 399 (AFANMTMSVR…VEEEGEIVMV (120 aa)) is an a nucleoside 3',5'-cyclic phosphate binding site. The N-terminal Ras-GEF domain maps to 412–526 (KGHIVIKATP…LLNIACAAKA (115 aa)). The PDZ domain occupies 530–615 (QVVLQKASRE…LTVKTNIFVF (86 aa)). The Ras-associating domain maps to 749–835 (PDQVIRVFKV…GRYYLKNNME (87 aa)). Residues 860–1088 (STIEVATQLS…LDVQGGAHKK (229 aa)) enclose the Ras-GEF domain. Disordered stretches follow at residues 1192-1274 (IRKK…SRSS), 1302-1324 (ESTGALEKTEHASGIGDHSQHGP), 1455-1478 (LESTPAESSEGLDPKDATDPVYKT), and 1571-1601 (QRHNLQPFHPKLGDVTDADSEADENEQVSAV). Low complexity-rich tracts occupy residues 1229–1238 (SVASSLHSSP) and 1255–1274 (SAKSDNLSDSSHSEISSRSS). Residues 1586 to 1601 (TDADSEADENEQVSAV) are compositionally biased toward acidic residues.

As to quaternary structure, interacts with the second PDZ domain of human PTP1e. As to expression, isoform 3 has highest expression levels in the brain, heart, liver, lung and placenta and is barely detectable in skeletal muscle, kidney and pancreas.

It localises to the cytoplasm. The protein resides in the cell membrane. Guanine nucleotide exchange factor (GEF) for Rap1A, Rap2A and M-Ras GTPases. Does not interact with cAMP. The polypeptide is Rap guanine nucleotide exchange factor 6 (RAPGEF6) (Homo sapiens (Human)).